A 345-amino-acid polypeptide reads, in one-letter code: Centromere protein U (345 aa).

Composition is skewed to basic residues over residues Met-1 to Asn-10 and His-19 to Phe-29. Disordered regions lie at residues Met-1–Val-37 and Ala-64–Gln-153. A compositionally biased stretch (basic and acidic residues) spans Asn-88–Glu-106. Residues Ser-142–Val-152 show a composition bias toward low complexity. Residues Cys-201–Asn-294 are a coiled coil. Positions Lys-222–Leu-239 match the Nuclear localization signal motif.

It belongs to the CENP-U/AME1 family. As to quaternary structure, interacts with CENPH-CENPI complex at the kinetochore.

The protein localises to the nucleus. The protein resides in the chromosome. It localises to the centromere. Probable component of a centromeric complex involved in assembly of kinetochore proteins, mitotic progression and chromosome segregation. Required for maintenance of sister chromatid adhesion during mitotic checkpoint activation. The chain is Centromere protein U (CENPU) from Gallus gallus (Chicken).